The primary structure comprises 208 residues: Probable transcriptional regulator ycf29 (208 aa).

Residues 11–118 (KLILIEPEEH…ELIAIISNLI (108 aa)) form the Response regulatory domain. Aspartate 60 is subject to 4-aspartylphosphate. The HTH luxR-type domain occupies 146–208 (TSFSYINLTV…NRIQILSYFN (63 aa)).

It is found in the plastid. The protein resides in the chloroplast. The sequence is that of Probable transcriptional regulator ycf29 (ycf29) from Guillardia theta (Cryptophyte).